Reading from the N-terminus, the 57-residue chain is Large ribosomal subunit protein bL32c (57 aa).

Residues 1 to 21 form a disordered region; that stretch reads MAVPKKRTSKSKKNLRKNTWK.

This sequence belongs to the bacterial ribosomal protein bL32 family.

The protein localises to the plastid. The protein resides in the chloroplast. In Stigeoclonium helveticum (Green alga), this protein is Large ribosomal subunit protein bL32c.